Reading from the N-terminus, the 128-residue chain is NADPH-dependent 7-cyano-7-deazaguanine reductase (128 aa).

The active-site Thioimide intermediate is cysteine 34. The Proton donor role is filled by aspartate 41. Substrate-binding positions include 56–58 and 75–76; these read VEL and HE.

Belongs to the GTP cyclohydrolase I family. QueF type 1 subfamily.

It is found in the cytoplasm. The catalysed reaction is 7-aminomethyl-7-carbaguanine + 2 NADP(+) = 7-cyano-7-deazaguanine + 2 NADPH + 3 H(+). Its pathway is tRNA modification; tRNA-queuosine biosynthesis. Its function is as follows. Catalyzes the NADPH-dependent reduction of 7-cyano-7-deazaguanine (preQ0) to 7-aminomethyl-7-deazaguanine (preQ1). In Thermomicrobium roseum (strain ATCC 27502 / DSM 5159 / P-2), this protein is NADPH-dependent 7-cyano-7-deazaguanine reductase.